The primary structure comprises 92 residues: MASLSHILVLCVGLLAMVNAEAPQEHDPFTYDYQSLRIGGLIIAGILFILGILIVLSRRCRCKFNQQQRTGEPDEEEGTFRSSIRRLSTRRR.

The first 20 residues, 1-20 (MASLSHILVLCVGLLAMVNA), serve as a signal peptide directing secretion. Topologically, residues 21–35 (EAPQEHDPFTYDYQS) are extracellular. Residues 36–56 (LRIGGLIIAGILFILGILIVL) form a helical membrane-spanning segment. Residues 57 to 92 (SRRCRCKFNQQQRTGEPDEEEGTFRSSIRRLSTRRR) are Cytoplasmic-facing. Residue C60 is the site of S-palmitoyl cysteine attachment. C62 carries the post-translational modification S-glutathionyl cysteine; alternate. Residue C62 is the site of S-palmitoyl cysteine; alternate attachment. The interval 65–92 (NQQQRTGEPDEEEGTFRSSIRRLSTRRR) is disordered. T79 carries the phosphothreonine modification. Phosphoserine is present on S82. S83 bears the Phosphoserine; by PKA and PKC mark. Over residues 83–92 (SIRRLSTRRR) the composition is skewed to basic residues. A Phosphoserine; by PKA modification is found at S88. T89 bears the Phosphothreonine; by PKC mark.

It belongs to the FXYD family. Homotetramer. Monomer. Regulatory subunit of the sodium/potassium-transporting ATPase (NKA) which is composed of a catalytic alpha subunit, an auxiliary non-catalytic beta subunit and an additional regulatory subunit. The monomeric form associates with NKA while the oligomeric form does not. Interacts with the catalytic alpha-1 subunit ATP1A1. Also interacts with the catalytic alpha-2 and alpha-3 subunits ATP1A2 and ATP1A3. Very little interaction with ATP1A1, ATP1A2 or ATP1A3 when phosphorylated at Ser-83. Interacts with the non-catalytic beta-1 subunit ATP1B1. Oxidative stress decreases interaction with ATP1A1 but increases interaction with ATP1B1. In terms of processing, major plasma membrane substrate for cAMP-dependent protein kinase (PKA) and protein kinase C (PKC) in several different tissues. Phosphorylated in response to insulin and adrenergic stimulation. Phosphorylation at Ser-88 stimulates sodium/potassium-transporting ATPase activity while the unphosphorylated form inhibits sodium/potassium-transporting ATPase activity. Phosphorylation increases tetramerization, decreases binding to ATP1A1 and reduces inhibition of ATP1A1 activity. Phosphorylation at Ser-83 leads to greatly reduced interaction with ATP1A1, ATP1A2 and ATP1A3. May be phosphorylated by DMPK. Post-translationally, palmitoylation increases half-life and stability and is enhanced upon phosphorylation at Ser-88 by PKA. In the brain, detected in cerebellum and choroid plexus (at protein level).

It localises to the cell membrane. The protein resides in the sarcolemma. It is found in the apical cell membrane. The protein localises to the membrane. Its subcellular location is the caveola. It localises to the T-tubule. Its function is as follows. Associates with and regulates the activity of the sodium/potassium-transporting ATPase (NKA) which transports Na(+) out of the cell and K(+) into the cell. Inhibits NKA activity in its unphosphorylated state and stimulates activity when phosphorylated. Reduces glutathionylation of the NKA beta-1 subunit ATP1B1, thus reversing glutathionylation-mediated inhibition of ATP1B1. Contributes to female sexual development by maintaining the excitability of neurons which secrete gonadotropin-releasing hormone. This chain is Phospholemman, found in Bos taurus (Bovine).